A 353-amino-acid polypeptide reads, in one-letter code: Protein disulfide isomerase CRELD2 (353 aa).

A signal peptide spans 1–24; the sequence is MRLPRRAALGLLPLLLLLPPAPEA. The short motif at 31–34 is the CXXC element; it reads CHRC. Cystine bridges form between Cys31–Cys34, Cys140–Cys154, Cys148–Cys166, and Cys168–Cys177. In terms of domain architecture, EGF-like 1 spans 136–178; that stretch reads DCLACQGGSQRPCSGNGHCSGDGSRQGDGSCRCHMGYQGPLCT. The FU 1 repeat unit spans residues 193–240; the sequence is HSICTACDESCKTCSGLTNRDCGECEVGWVLDEGACVDVDECAAEPPP. Asn251 is a glycosylation site (N-linked (GlcNAc...) asparagine). An FU 2 repeat occupies 253-302; that stretch reads SYTCEECDSSCVGCTGEGPGNCKECISGYAREHGQCADVDECSLAEKTCV. Residues 263–266 carry the CXXC motif; the sequence is CVGC. 4 disulfides stabilise this stretch: Cys263–Cys266, Cys294–Cys308, Cys301–Cys317, and Cys319–Cys330. In terms of domain architecture, EGF-like 2; calcium-binding spans 290 to 331; that stretch reads DVDECSLAEKTCVRKNENCYNTPGSYVCVCPDGFEETEDACV. The tract at residues 332-353 is disordered; sequence PPAEAEATEGESPTQLPSREDL. The segment covering 342–353 has biased composition (polar residues); it reads ESPTQLPSREDL.

The protein belongs to the CRELD family. Interacts with CHRNA4. Component of a complex containing at least CRELD2, MANF, MATN3 and PDIA4. Ubiquitously expressed. Highly expressed in skeletal muscle, heart, liver, kidney and placenta.

The protein resides in the endoplasmic reticulum. It carries out the reaction Catalyzes the rearrangement of -S-S- bonds in proteins.. Functionally, protein disulfide isomerase. Might play a role in the unfolded protein response. May regulate transport of alpha4-beta2 neuronal acetylcholine receptor. The chain is Protein disulfide isomerase CRELD2 (CRELD2) from Homo sapiens (Human).